Consider the following 106-residue polypeptide: Nucleoid-associated protein Rpal_0620 (106 aa).

The protein belongs to the YbaB/EbfC family. Homodimer.

It localises to the cytoplasm. It is found in the nucleoid. Functionally, binds to DNA and alters its conformation. May be involved in regulation of gene expression, nucleoid organization and DNA protection. The sequence is that of Nucleoid-associated protein Rpal_0620 from Rhodopseudomonas palustris (strain TIE-1).